Reading from the N-terminus, the 84-residue chain is MILMVKAIVDITDENNRIINIVKAKYNLRDKSQAINKIIEEYAEFLLEDELKPEYIEKIRNIMKNEKPIYIGSIENLKKRYLGE.

Functionally, antitoxin component of a type II toxin-antitoxin (TA) system. Its cognate toxin is RelE4 (Potential). The protein is Putative antitoxin RelB4 (relB4) of Methanocaldococcus jannaschii (strain ATCC 43067 / DSM 2661 / JAL-1 / JCM 10045 / NBRC 100440) (Methanococcus jannaschii).